Here is a 268-residue protein sequence, read N- to C-terminus: Adenosylcobinamide-GDP ribazoletransferase (268 aa).

Helical transmembrane passes span 1-21 (MAGNLLNGLRAAIAFLTTLPV), 36-56 (YLFIPVAIVTGLLLGVAGTLF), 59-79 (ILPAPFAAVLTVACIFLLTGI), 112-132 (AGGLLFMAMDLLFLFALAMTF), 138-158 (WLFVPLLVAEGCAKVAQITII), 182-202 (LAAVIGAWIAIGIAIIGAAII), 212-232 (IMAGGLAMLSPLAVALIILII), and 244-264 (VIGAANEIARIAALGVMGAVL).

This sequence belongs to the CobS family. The cofactor is Mg(2+).

It localises to the cell membrane. It carries out the reaction alpha-ribazole + adenosylcob(III)inamide-GDP = adenosylcob(III)alamin + GMP + H(+). It catalyses the reaction alpha-ribazole 5'-phosphate + adenosylcob(III)inamide-GDP = adenosylcob(III)alamin 5'-phosphate + GMP + H(+). The protein operates within cofactor biosynthesis; adenosylcobalamin biosynthesis; adenosylcobalamin from cob(II)yrinate a,c-diamide: step 7/7. Joins adenosylcobinamide-GDP and alpha-ribazole to generate adenosylcobalamin (Ado-cobalamin). Also synthesizes adenosylcobalamin 5'-phosphate from adenosylcobinamide-GDP and alpha-ribazole 5'-phosphate. The chain is Adenosylcobinamide-GDP ribazoletransferase from Methanocella arvoryzae (strain DSM 22066 / NBRC 105507 / MRE50).